A 426-amino-acid polypeptide reads, in one-letter code: Enolase (426 aa).

Residues 32-53 (TGRAAVPSGASTGAYEAHEQRD) are disordered. Gln-163 lines the (2R)-2-phosphoglycerate pocket. Residue Glu-205 is the Proton donor of the active site. Asp-242, Glu-285, and Asp-312 together coordinate Mg(2+). Lys-337, Arg-366, Ser-367, and Lys-388 together coordinate (2R)-2-phosphoglycerate. Lys-337 acts as the Proton acceptor in catalysis.

Belongs to the enolase family. Mg(2+) serves as cofactor.

Its subcellular location is the cytoplasm. It localises to the secreted. It is found in the cell surface. It catalyses the reaction (2R)-2-phosphoglycerate = phosphoenolpyruvate + H2O. It functions in the pathway carbohydrate degradation; glycolysis; pyruvate from D-glyceraldehyde 3-phosphate: step 4/5. Functionally, catalyzes the reversible conversion of 2-phosphoglycerate (2-PG) into phosphoenolpyruvate (PEP). It is essential for the degradation of carbohydrates via glycolysis. The sequence is that of Enolase from Hyphomonas neptunium (strain ATCC 15444).